We begin with the raw amino-acid sequence, 320 residues long: o-succinylbenzoate synthase (320 aa).

Lys-133 functions as the Proton donor in the catalytic mechanism. Asp-161, Glu-190, and Asp-213 together coordinate Mg(2+). The active-site Proton acceptor is Lys-235.

It belongs to the mandelate racemase/muconate lactonizing enzyme family. MenC type 1 subfamily. It depends on a divalent metal cation as a cofactor.

It carries out the reaction (1R,6R)-6-hydroxy-2-succinyl-cyclohexa-2,4-diene-1-carboxylate = 2-succinylbenzoate + H2O. It participates in quinol/quinone metabolism; 1,4-dihydroxy-2-naphthoate biosynthesis; 1,4-dihydroxy-2-naphthoate from chorismate: step 4/7. It functions in the pathway quinol/quinone metabolism; menaquinone biosynthesis. In terms of biological role, converts 2-succinyl-6-hydroxy-2,4-cyclohexadiene-1-carboxylate (SHCHC) to 2-succinylbenzoate (OSB). The sequence is that of o-succinylbenzoate synthase from Escherichia coli O127:H6 (strain E2348/69 / EPEC).